A 465-amino-acid chain; its full sequence is Argininosuccinate lyase (465 aa).

Belongs to the lyase 1 family. Argininosuccinate lyase subfamily.

The protein localises to the cytoplasm. It catalyses the reaction 2-(N(omega)-L-arginino)succinate = fumarate + L-arginine. It participates in amino-acid biosynthesis; L-arginine biosynthesis; L-arginine from L-ornithine and carbamoyl phosphate: step 3/3. In Methylococcus capsulatus (strain ATCC 33009 / NCIMB 11132 / Bath), this protein is Argininosuccinate lyase.